We begin with the raw amino-acid sequence, 495 residues long: SH2 domain-containing adapter protein E (495 aa).

Disordered stretches follow at residues Thr-51 to Lys-190, Asp-203 to Asp-233, and Leu-256 to Gln-327. Position 107 is a phosphoserine (Ser-107). Positions Thr-135–Ile-144 are enriched in polar residues. Positions Ile-148 to Gly-157 are enriched in basic and acidic residues. Low complexity predominate over residues Pro-162 to Ser-181. 2 stretches are compositionally biased toward basic and acidic residues: residues Tyr-208 to Glu-224 and Pro-301 to Gln-327. In terms of domain architecture, SH2 spans Trp-395 to Val-490.

This is SH2 domain-containing adapter protein E (SHE) from Homo sapiens (Human).